Here is a 460-residue protein sequence, read N- to C-terminus: Cysteine--tRNA ligase (460 aa).

Cys29 contacts Zn(2+). The short motif at 31-41 (MTIYDLCHIGH) is the 'HIGH' region element. 3 residues coordinate Zn(2+): Cys213, His238, and Glu242. Residues 270-274 (KMSKS) carry the 'KMSKS' region motif. ATP is bound at residue Lys273.

Belongs to the class-I aminoacyl-tRNA synthetase family. As to quaternary structure, monomer. Zn(2+) is required as a cofactor.

It is found in the cytoplasm. The catalysed reaction is tRNA(Cys) + L-cysteine + ATP = L-cysteinyl-tRNA(Cys) + AMP + diphosphate. The polypeptide is Cysteine--tRNA ligase (Verminephrobacter eiseniae (strain EF01-2)).